The following is a 393-amino-acid chain: uncharacterized protein (393 aa).

The Flavodoxin-like domain occupies 250-389 (AVIVYDTMYN…KCYEFGKRLA (140 aa)).

This is an uncharacterized protein from Methanocaldococcus jannaschii (strain ATCC 43067 / DSM 2661 / JAL-1 / JCM 10045 / NBRC 100440) (Methanococcus jannaschii).